Here is a 391-residue protein sequence, read N- to C-terminus: Phosphoglycerate kinase (391 aa).

Substrate is bound by residues 21-23 (DFN), Arg36, 59-62 (HLGR), Arg113, and Arg146. Residues Lys197, Glu319, and 345-348 (GGDT) each bind ATP.

The protein belongs to the phosphoglycerate kinase family. Monomer.

It is found in the cytoplasm. It catalyses the reaction (2R)-3-phosphoglycerate + ATP = (2R)-3-phospho-glyceroyl phosphate + ADP. Its pathway is carbohydrate degradation; glycolysis; pyruvate from D-glyceraldehyde 3-phosphate: step 2/5. In Methylococcus capsulatus (strain ATCC 33009 / NCIMB 11132 / Bath), this protein is Phosphoglycerate kinase.